A 483-amino-acid chain; its full sequence is V-type proton ATPase subunit H (483 aa).

Phosphoserine is present on Ser-483.

Belongs to the V-ATPase H subunit family. V-ATPase is a heteromultimeric enzyme made up of two complexes: the ATP-hydrolytic V1 complex and the proton translocation V0 complex. The V1 complex consists of three catalytic AB heterodimers that form a heterohexamer, three peripheral stalks each consisting of EG heterodimers, one central rotor including subunits D and F, and the regulatory subunits C and H. The proton translocation complex V0 consists of the proton transport subunit a, a ring of proteolipid subunits c9c'', rotary subunit d, subunits e and f, and the accessory subunits ATP6AP1/Ac45 and ATP6AP2/PRR. Interacts with AP2M1.

It is found in the cytoplasmic vesicle. The protein localises to the clathrin-coated vesicle membrane. In terms of biological role, subunit of the V1 complex of vacuolar(H+)-ATPase (V-ATPase), a multisubunit enzyme composed of a peripheral complex (V1) that hydrolyzes ATP and a membrane integral complex (V0) that translocates protons. V-ATPase is responsible for acidifying and maintaining the pH of intracellular compartments and in some cell types, is targeted to the plasma membrane, where it is responsible for acidifying the extracellular environment. Subunit H is essential for V-ATPase activity, but not for the assembly of the complex. Involved in the endocytosis mediated by clathrin-coated pits, required for the formation of endosomes. The protein is V-type proton ATPase subunit H (ATP6V1H) of Sus scrofa (Pig).